The primary structure comprises 477 residues: Bifunctional protein HldE (477 aa).

Residues 1 to 318 form a ribokinase region; sequence MKVTLPEFER…ENAVRGRAET (318 aa). Lys179 carries the post-translational modification N6-acetyllysine. ATP is bound at residue 195–198; that stretch reads NLSE. Asp264 is an active-site residue. Residues 344 to 477 form a cytidylyltransferase region; it reads MTNGVFDILH…IKKIQQDKKG (134 aa).

The protein in the N-terminal section; belongs to the carbohydrate kinase PfkB family. This sequence in the C-terminal section; belongs to the cytidylyltransferase family. Homodimer.

It catalyses the reaction D-glycero-beta-D-manno-heptose 7-phosphate + ATP = D-glycero-beta-D-manno-heptose 1,7-bisphosphate + ADP + H(+). The catalysed reaction is D-glycero-beta-D-manno-heptose 1-phosphate + ATP + H(+) = ADP-D-glycero-beta-D-manno-heptose + diphosphate. It participates in nucleotide-sugar biosynthesis; ADP-L-glycero-beta-D-manno-heptose biosynthesis; ADP-L-glycero-beta-D-manno-heptose from D-glycero-beta-D-manno-heptose 7-phosphate: step 1/4. It functions in the pathway nucleotide-sugar biosynthesis; ADP-L-glycero-beta-D-manno-heptose biosynthesis; ADP-L-glycero-beta-D-manno-heptose from D-glycero-beta-D-manno-heptose 7-phosphate: step 3/4. Its function is as follows. Catalyzes the phosphorylation of D-glycero-D-manno-heptose 7-phosphate at the C-1 position to selectively form D-glycero-beta-D-manno-heptose-1,7-bisphosphate. Functionally, catalyzes the ADP transfer from ATP to D-glycero-beta-D-manno-heptose 1-phosphate, yielding ADP-D-glycero-beta-D-manno-heptose. The protein is Bifunctional protein HldE of Shigella dysenteriae serotype 1 (strain Sd197).